Consider the following 620-residue polypeptide: Chaperone protein HscA homolog (620 aa).

This sequence belongs to the heat shock protein 70 family.

Its function is as follows. Chaperone involved in the maturation of iron-sulfur cluster-containing proteins. Has a low intrinsic ATPase activity which is markedly stimulated by HscB. This Bordetella pertussis (strain Tohama I / ATCC BAA-589 / NCTC 13251) protein is Chaperone protein HscA homolog.